The primary structure comprises 501 residues: 4,4'-diapophytoene desaturase (4,4'-diaponeurosporene-forming) (501 aa).

An FAD-binding site is contributed by 5 to 17 (VVGAGVTGLAAAA).

It belongs to the carotenoid/retinoid oxidoreductase family. CrtN subfamily.

The enzyme catalyses 15-cis-4,4'-diapophytoene + 3 FAD + 3 H(+) = all-trans-4,4'-diaponeurosporene + 3 FADH2. It participates in carotenoid biosynthesis; staphyloxanthin biosynthesis; staphyloxanthin from farnesyl diphosphate: step 2/5. Functionally, involved in the biosynthesis of the yellow-orange carotenoid staphyloxanthin, which plays a role in the virulence via its protective function against oxidative stress. Catalyzes three successive dehydrogenation reactions that lead to the introduction of three double bonds into 4,4'-diapophytoene (dehydrosqualene), with 4,4'-diapophytofluene and 4,4'-diapo-zeta-carotene as intermediates, and 4,4'-diaponeurosporene (the major deep-yellow pigment in staphylococci strains) as the end product. The protein is 4,4'-diapophytoene desaturase (4,4'-diaponeurosporene-forming) of Staphylococcus haemolyticus (strain JCSC1435).